The sequence spans 245 residues: Ribonuclease PH (245 aa).

Phosphate contacts are provided by residues Arg86 and Gly124–Arg126.

Belongs to the RNase PH family. In terms of assembly, homohexameric ring arranged as a trimer of dimers.

The enzyme catalyses tRNA(n+1) + phosphate = tRNA(n) + a ribonucleoside 5'-diphosphate. In terms of biological role, phosphorolytic 3'-5' exoribonuclease that plays an important role in tRNA 3'-end maturation. Removes nucleotide residues following the 3'-CCA terminus of tRNAs; can also add nucleotides to the ends of RNA molecules by using nucleoside diphosphates as substrates, but this may not be physiologically important. Probably plays a role in initiation of 16S rRNA degradation (leading to ribosome degradation) during starvation. The polypeptide is Ribonuclease PH (Bacillus cereus (strain G9842)).